A 517-amino-acid chain; its full sequence is MANINLDAFDKIIALDFGSQYNQLITRRLRDFGIYSELLSHKLTADEIKEINPKGIIFSGGPNSVYDPNAFKVDPEIFKLGIPILGICYGMQLMSYDLGGKVEKADNSEYGRADIEVLDDEAVLLKGLPKKQYVWMSHGDLVTQAPAGFEVTATSKNCPIASIADNDRKFYGVQFHPEVRNSEYGLDILRRFAFDVCGAKANWTMDDFIDMQIDEIRKEVGDKKVILGLSGGVDSSVTAVLIHKAIGDQLTCIFVDHGLLRKNEADQVMDALSRDLGVNIIKVDAADRFLGKLEGVTDPEQKRKIIGKEFIEVFNEEAKKIKDADFLAQGTLYTDVIESGTDTAQTIKSHHNVGGLPKKLGFKLIEPLRKLFKDETRELGEKLGIPHELVWRQPFPGPGLGIRVIGEITPEKLEIVRESDAILREEIKKAGLDEEIWQYFTVLPGIRSVGVMGDGRTYDYAVAIRAVTSIDGMTADFAKIPWDILQKISVRIVNEVDHVNRILYDVTSKPPSTIEYE.

Residues 11-202 (KIIALDFGSQ…AFDVCGAKAN (192 aa)) enclose the Glutamine amidotransferase type-1 domain. Cysteine 88 serves as the catalytic Nucleophile. Active-site residues include histidine 176 and glutamate 178. Positions 203–392 (WTMDDFIDMQ…LGIPHELVWR (190 aa)) constitute a GMPS ATP-PPase domain. Residue 230–236 (SGGVDSS) participates in ATP binding.

Homodimer.

It carries out the reaction XMP + L-glutamine + ATP + H2O = GMP + L-glutamate + AMP + diphosphate + 2 H(+). The protein operates within purine metabolism; GMP biosynthesis; GMP from XMP (L-Gln route): step 1/1. Its function is as follows. Catalyzes the synthesis of GMP from XMP. In Limosilactobacillus reuteri (strain DSM 20016) (Lactobacillus reuteri), this protein is GMP synthase [glutamine-hydrolyzing].